Consider the following 325-residue polypeptide: 33 kDa chaperonin (325 aa).

Disulfide bonds link Cys260/Cys262 and Cys293/Cys296.

Belongs to the HSP33 family. Post-translationally, under oxidizing conditions two disulfide bonds are formed involving the reactive cysteines. Under reducing conditions zinc is bound to the reactive cysteines and the protein is inactive.

The protein resides in the cytoplasm. Its function is as follows. Redox regulated molecular chaperone. Protects both thermally unfolding and oxidatively damaged proteins from irreversible aggregation. Plays an important role in the bacterial defense system toward oxidative stress. The protein is 33 kDa chaperonin of Aquifex aeolicus (strain VF5).